The chain runs to 142 residues: D-aminoacyl-tRNA deacylase (142 aa).

The Gly-cisPro motif, important for rejection of L-amino acids motif lies at 133-134 (GP).

This sequence belongs to the DTD family. In terms of assembly, homodimer.

It is found in the cytoplasm. The catalysed reaction is glycyl-tRNA(Ala) + H2O = tRNA(Ala) + glycine + H(+). The enzyme catalyses a D-aminoacyl-tRNA + H2O = a tRNA + a D-alpha-amino acid + H(+). An aminoacyl-tRNA editing enzyme that deacylates mischarged D-aminoacyl-tRNAs. Also deacylates mischarged glycyl-tRNA(Ala), protecting cells against glycine mischarging by AlaRS. Acts via tRNA-based rather than protein-based catalysis; rejects L-amino acids rather than detecting D-amino acids in the active site. By recycling D-aminoacyl-tRNA to D-amino acids and free tRNA molecules, this enzyme counteracts the toxicity associated with the formation of D-aminoacyl-tRNA entities in vivo and helps enforce protein L-homochirality. The sequence is that of D-aminoacyl-tRNA deacylase from Acidothermus cellulolyticus (strain ATCC 43068 / DSM 8971 / 11B).